A 467-amino-acid polypeptide reads, in one-letter code: Glutamate--tRNA ligase (467 aa).

The 'HIGH' region signature appears at 10–20 (PSPTGYLHVGG). The 'KMSKS' region motif lies at 238-242 (RLSKR). Lys-241 contributes to the ATP binding site.

It belongs to the class-I aminoacyl-tRNA synthetase family. Glutamate--tRNA ligase type 1 subfamily. In terms of assembly, monomer.

The protein resides in the cytoplasm. The catalysed reaction is tRNA(Glu) + L-glutamate + ATP = L-glutamyl-tRNA(Glu) + AMP + diphosphate. In terms of biological role, catalyzes the attachment of glutamate to tRNA(Glu) in a two-step reaction: glutamate is first activated by ATP to form Glu-AMP and then transferred to the acceptor end of tRNA(Glu). The chain is Glutamate--tRNA ligase from Citrifermentans bemidjiense (strain ATCC BAA-1014 / DSM 16622 / JCM 12645 / Bem) (Geobacter bemidjiensis).